The following is a 476-amino-acid chain: Light-independent protochlorophyllide reductase subunit N (476 aa).

Residues Cys31, Cys56, and Cys116 each contribute to the [4Fe-4S] cluster site.

Belongs to the BchN/ChlN family. As to quaternary structure, protochlorophyllide reductase is composed of three subunits; ChlL, ChlN and ChlB. Forms a heterotetramer of two ChlB and two ChlN subunits. Requires [4Fe-4S] cluster as cofactor.

It is found in the plastid. Its subcellular location is the chloroplast. It carries out the reaction chlorophyllide a + oxidized 2[4Fe-4S]-[ferredoxin] + 2 ADP + 2 phosphate = protochlorophyllide a + reduced 2[4Fe-4S]-[ferredoxin] + 2 ATP + 2 H2O. It participates in porphyrin-containing compound metabolism; chlorophyll biosynthesis (light-independent). In terms of biological role, component of the dark-operative protochlorophyllide reductase (DPOR) that uses Mg-ATP and reduced ferredoxin to reduce ring D of protochlorophyllide (Pchlide) to form chlorophyllide a (Chlide). This reaction is light-independent. The NB-protein (ChlN-ChlB) is the catalytic component of the complex. The chain is Light-independent protochlorophyllide reductase subunit N from Staurastrum punctulatum (Green alga).